Here is a 162-residue protein sequence, read N- to C-terminus: 2-C-methyl-D-erythritol 2,4-cyclodiphosphate synthase (162 aa).

A divalent metal cation is bound by residues Asp9 and His11. 4-CDP-2-C-methyl-D-erythritol 2-phosphate-binding positions include 9 to 11 (DVH) and 35 to 36 (HS). An a divalent metal cation-binding site is contributed by His43. 4-CDP-2-C-methyl-D-erythritol 2-phosphate is bound by residues 57 to 59 (DIG), 62 to 66 (FPDTD), 133 to 136 (TTTE), Phe140, and Arg143.

This sequence belongs to the IspF family. In terms of assembly, homotrimer. The cofactor is a divalent metal cation.

It carries out the reaction 4-CDP-2-C-methyl-D-erythritol 2-phosphate = 2-C-methyl-D-erythritol 2,4-cyclic diphosphate + CMP. It functions in the pathway isoprenoid biosynthesis; isopentenyl diphosphate biosynthesis via DXP pathway; isopentenyl diphosphate from 1-deoxy-D-xylulose 5-phosphate: step 4/6. Functionally, involved in the biosynthesis of isopentenyl diphosphate (IPP) and dimethylallyl diphosphate (DMAPP), two major building blocks of isoprenoid compounds. Catalyzes the conversion of 4-diphosphocytidyl-2-C-methyl-D-erythritol 2-phosphate (CDP-ME2P) to 2-C-methyl-D-erythritol 2,4-cyclodiphosphate (ME-CPP) with a corresponding release of cytidine 5-monophosphate (CMP). This chain is 2-C-methyl-D-erythritol 2,4-cyclodiphosphate synthase, found in Histophilus somni (strain 129Pt) (Haemophilus somnus).